The primary structure comprises 127 residues: Large ribosomal subunit protein bL12 (127 aa).

Belongs to the bacterial ribosomal protein bL12 family. As to quaternary structure, homodimer. Part of the ribosomal stalk of the 50S ribosomal subunit. Forms a multimeric L10(L12)X complex, where L10 forms an elongated spine to which 2 to 4 L12 dimers bind in a sequential fashion. Binds GTP-bound translation factors.

In terms of biological role, forms part of the ribosomal stalk which helps the ribosome interact with GTP-bound translation factors. Is thus essential for accurate translation. The chain is Large ribosomal subunit protein bL12 from Symbiobacterium thermophilum (strain DSM 24528 / JCM 14929 / IAM 14863 / T).